Here is a 665-residue protein sequence, read N- to C-terminus: Macrolide export ATP-binding/permease protein MacB (665 aa).

Positions 17-255 (MQVKGLIREF…AAQPASIIDK (239 aa)) constitute an ABC transporter domain. 53–60 (GQSGSGKS) contributes to the ATP binding site. A run of 4 helical transmembrane segments spans residues 287-307 (LLTM…VGLG), 544-564 (IAII…LVSV), 588-608 (FLIE…GLAF), and 630-650 (SIIA…FLPA).

This sequence belongs to the ABC transporter superfamily. Macrolide exporter (TC 3.A.1.122) family. In terms of assembly, homodimer. Part of the tripartite efflux system MacAB-TolC, which is composed of an inner membrane transporter, MacB, a periplasmic membrane fusion protein, MacA, and an outer membrane component, TolC. The complex forms a large protein conduit and can translocate molecules across both the inner and outer membranes. Interacts with MacA.

It is found in the cell inner membrane. In terms of biological role, part of the tripartite efflux system MacAB-TolC. MacB is a non-canonical ABC transporter that contains transmembrane domains (TMD), which form a pore in the inner membrane, and an ATP-binding domain (NBD), which is responsible for energy generation. Confers resistance against macrolides. This Psychrobacter cryohalolentis (strain ATCC BAA-1226 / DSM 17306 / VKM B-2378 / K5) protein is Macrolide export ATP-binding/permease protein MacB.